Here is a 78-residue protein sequence, read N- to C-terminus: Large ribosomal subunit protein bL28 (78 aa).

Belongs to the bacterial ribosomal protein bL28 family.

This Hydrogenovibrio crunogenus (strain DSM 25203 / XCL-2) (Thiomicrospira crunogena) protein is Large ribosomal subunit protein bL28.